The following is a 589-amino-acid chain: 2-succinyl-5-enolpyruvyl-6-hydroxy-3-cyclohexene-1-carboxylate synthase (589 aa).

The segment at 198–222 is disordered; sequence DAATTEGAHDSHAPSQPTRGPRKLP.

Belongs to the TPP enzyme family. MenD subfamily. Homodimer. It depends on Mg(2+) as a cofactor. Requires Mn(2+) as cofactor. The cofactor is thiamine diphosphate.

The enzyme catalyses isochorismate + 2-oxoglutarate + H(+) = 5-enolpyruvoyl-6-hydroxy-2-succinyl-cyclohex-3-ene-1-carboxylate + CO2. Its pathway is quinol/quinone metabolism; 1,4-dihydroxy-2-naphthoate biosynthesis; 1,4-dihydroxy-2-naphthoate from chorismate: step 2/7. It participates in quinol/quinone metabolism; menaquinone biosynthesis. Its function is as follows. Catalyzes the thiamine diphosphate-dependent decarboxylation of 2-oxoglutarate and the subsequent addition of the resulting succinic semialdehyde-thiamine pyrophosphate anion to isochorismate to yield 2-succinyl-5-enolpyruvyl-6-hydroxy-3-cyclohexene-1-carboxylate (SEPHCHC). The protein is 2-succinyl-5-enolpyruvyl-6-hydroxy-3-cyclohexene-1-carboxylate synthase of Corynebacterium jeikeium (strain K411).